Consider the following 60-residue polypeptide: MKLTCVLIVAVLILTACQVIAADGWFGEESSCWWCTGQNKCCEEAQVCQSVNYACPPARR.

The first 22 residues, 1-22 (MKLTCVLIVAVLILTACQVIAA), serve as a signal peptide directing secretion. 3 disulfides stabilise this stretch: cysteine 32/cysteine 42, cysteine 35/cysteine 48, and cysteine 41/cysteine 55.

This sequence belongs to the conotoxin O1 superfamily. As to expression, expressed by the venom duct.

Its subcellular location is the secreted. Functionally, probable neurotoxin. In Californiconus californicus (California cone), this protein is Conotoxin Cal6.20.